We begin with the raw amino-acid sequence, 119 residues long: Flagellar transcriptional regulator FlhD (119 aa).

It belongs to the FlhD family. Homodimer; disulfide-linked. Forms a heterohexamer composed of two FlhC and four FlhD subunits. Each FlhC binds a FlhD dimer, forming a heterotrimer, and a hexamer assembles by dimerization of two heterotrimers.

Its subcellular location is the cytoplasm. In terms of biological role, functions in complex with FlhC as a master transcriptional regulator that regulates transcription of several flagellar and non-flagellar operons by binding to their promoter region. Activates expression of class 2 flagellar genes, including fliA, which is a flagellum-specific sigma factor that turns on the class 3 genes. Also regulates genes whose products function in a variety of physiological pathways. In Serratia marcescens, this protein is Flagellar transcriptional regulator FlhD.